Reading from the N-terminus, the 81-residue chain is Small ribosomal subunit protein bS18 (81 aa).

This sequence belongs to the bacterial ribosomal protein bS18 family. As to quaternary structure, part of the 30S ribosomal subunit. Forms a tight heterodimer with protein bS6.

Functionally, binds as a heterodimer with protein bS6 to the central domain of the 16S rRNA, where it helps stabilize the platform of the 30S subunit. The protein is Small ribosomal subunit protein bS18 of Chloroflexus aurantiacus (strain ATCC 29366 / DSM 635 / J-10-fl).